Consider the following 491-residue polypeptide: AP-2 complex subunit mu (491 aa).

3 positions are modified to phosphoserine: S179, S180, and S181. Residues 209–490 (KDEVFLYVNE…ISKAGSYEVR (282 aa)) form the MHD domain.

Belongs to the adaptor complexes medium subunit family. Adaptor protein complex 2 (AP-2) is a heterotetramer composed of two large adaptins (alpha-type subunit APL3 and beta-type subunit APL1), a medium chain (mu-type subunit APM4) and a small adaptin (sigma-type subunit APS2).

It is found in the membrane. The protein resides in the clathrin-coated pit. The protein localises to the cytoplasmic vesicle. It localises to the clathrin-coated vesicle membrane. In terms of biological role, component of the adaptor complexes which link clathrin to receptors in coated vesicles. Clathrin-associated protein complexes are believed to interact with the cytoplasmic tails of membrane proteins, leading to their selection and concentration. This Saccharomyces cerevisiae (strain ATCC 204508 / S288c) (Baker's yeast) protein is AP-2 complex subunit mu (APM4).